Consider the following 211-residue polypeptide: Probable nicotinate-nucleotide adenylyltransferase (211 aa).

It belongs to the NadD family.

The enzyme catalyses nicotinate beta-D-ribonucleotide + ATP + H(+) = deamido-NAD(+) + diphosphate. It participates in cofactor biosynthesis; NAD(+) biosynthesis; deamido-NAD(+) from nicotinate D-ribonucleotide: step 1/1. Functionally, catalyzes the reversible adenylation of nicotinate mononucleotide (NaMN) to nicotinic acid adenine dinucleotide (NaAD). This is Probable nicotinate-nucleotide adenylyltransferase from Gemmatimonas aurantiaca (strain DSM 14586 / JCM 11422 / NBRC 100505 / T-27).